Here is a 118-residue protein sequence, read N- to C-terminus: Large ribosomal subunit protein uL24 (118 aa).

Belongs to the universal ribosomal protein uL24 family. Part of the 50S ribosomal subunit.

One of two assembly initiator proteins, it binds directly to the 5'-end of the 23S rRNA, where it nucleates assembly of the 50S subunit. Its function is as follows. One of the proteins that surrounds the polypeptide exit tunnel on the outside of the subunit. The sequence is that of Large ribosomal subunit protein uL24 from Prochlorococcus marinus (strain NATL1A).